Here is a 381-residue protein sequence, read N- to C-terminus: Pulmonary surfactant-associated protein B (381 aa).

The N-terminal stretch at M1 to A24 is a signal peptide. The 41-residue stretch at W25 to A65 folds into the Saposin A-type domain. Residues W25 to Q200 constitute a propeptide that is removed on maturation. Saposin B-type domains are found at residues A65–Q147, P204–D281, and R295–S370. 9 cysteine pairs are disulfide-bonded: C69–C143, C72–C137, C100–C112, C208–C277, C211–C271, C235–C246, C299–C366, C302–C360, and C325–C335. N-linked (GlcNAc...) asparagine glycosylation is present at N129. Residues D280–L381 constitute a propeptide that is removed on maturation. The N-linked (GlcNAc...) asparagine glycan is linked to N311.

In terms of assembly, homodimer; disulfide-linked.

It is found in the secreted. Its subcellular location is the extracellular space. The protein resides in the surface film. Functionally, pulmonary surfactant-associated proteins promote alveolar stability by lowering the surface tension at the air-liquid interface in the peripheral air spaces. SP-B increases the collapse pressure of palmitic acid to nearly 70 millinewtons per meter. The chain is Pulmonary surfactant-associated protein B (SFTPB) from Homo sapiens (Human).